The following is a 288-amino-acid chain: MSPNPTNIHTGKTLRLLYHPASQPCRSAHQFMYEIDVPFEEEVVDISTDITERQEFRDKYNPTGQVPILVDGEFTVWESVAIARYVNEKFDGAGNWFGRGTQERAQINQFLQWYAYTLRLGGGAFHWNIFGCLIYGEKPYSPKFTAEQNKGRTLLYEAMGTLENYWLRDREYVCGDEVSYADLAAFHEFVSHEAGKIIPDRVWQGFPKIAAWFKKLSERPHAKTVSEWQYTNVGKIIRGELTASMFKRKTAVLKGTEVFSGHNHGIPYLNEKAEDYFKRVEKEGAAVA.

In terms of domain architecture, GST N-terminal spans 12–94 (KTLRLLYHPA…YVNEKFDGAG (83 aa)). Residues 100–252 (GTQERAQINQ…ASMFKRKTAV (153 aa)) form the GST C-terminal domain.

The protein belongs to the GST superfamily. In terms of assembly, homohexamer.

It localises to the cytoplasm. It carries out the reaction dichloromethane + H2O = formaldehyde + 2 chloride + 2 H(+). It functions in the pathway xenobiotic degradation; dichloromethane degradation. In Methylorubrum extorquens (strain DSM 6343 / CIP 106787 / DM4) (Methylobacterium extorquens), this protein is Dichloromethane dehalogenase (dcmA).